We begin with the raw amino-acid sequence, 131 residues long: Transcription antitermination protein NusB (131 aa).

Belongs to the NusB family.

Its function is as follows. Involved in transcription antitermination. Required for transcription of ribosomal RNA (rRNA) genes. Binds specifically to the boxA antiterminator sequence of the ribosomal RNA (rrn) operons. The sequence is that of Transcription antitermination protein NusB from Agathobacter rectalis (strain ATCC 33656 / DSM 3377 / JCM 17463 / KCTC 5835 / VPI 0990) (Eubacterium rectale).